The chain runs to 252 residues: Glucosamine-6-phosphate deaminase (252 aa).

Catalysis depends on D67, which acts as the Proton acceptor; for enolization step. N137 acts as the For ring-opening step in catalysis. Catalysis depends on H139, which acts as the Proton acceptor; for ring-opening step. E144 serves as the catalytic For ring-opening step.

It belongs to the glucosamine/galactosamine-6-phosphate isomerase family. NagB subfamily.

It catalyses the reaction alpha-D-glucosamine 6-phosphate + H2O = beta-D-fructose 6-phosphate + NH4(+). It participates in amino-sugar metabolism; N-acetylneuraminate degradation; D-fructose 6-phosphate from N-acetylneuraminate: step 5/5. Catalyzes the reversible isomerization-deamination of glucosamine 6-phosphate (GlcN6P) to form fructose 6-phosphate (Fru6P) and ammonium ion. The sequence is that of Glucosamine-6-phosphate deaminase from Staphylococcus aureus (strain bovine RF122 / ET3-1).